The following is a 119-amino-acid chain: Holo-[acyl-carrier-protein] synthase (119 aa).

2 residues coordinate Mg(2+): aspartate 8 and glutamate 58.

Belongs to the P-Pant transferase superfamily. AcpS family. Requires Mg(2+) as cofactor.

The protein resides in the cytoplasm. The enzyme catalyses apo-[ACP] + CoA = holo-[ACP] + adenosine 3',5'-bisphosphate + H(+). Transfers the 4'-phosphopantetheine moiety from coenzyme A to a Ser of acyl-carrier-protein. This chain is Holo-[acyl-carrier-protein] synthase, found in Bacillus cereus (strain G9842).